A 39-amino-acid polypeptide reads, in one-letter code: Glutenin, high molecular weight subunit PC237 (39 aa).

The protein belongs to the gliadin/glutenin family. In terms of assembly, disulfide-bridge linked aggregates.

Functionally, glutenins are high-molecular weight seed storage proteins of wheat endosperm. Thought to be responsible for the visco-elastic property of wheat dough. The chain is Glutenin, high molecular weight subunit PC237 from Triticum aestivum (Wheat).